A 466-amino-acid polypeptide reads, in one-letter code: Glutamate--tRNA ligase 2 (466 aa).

A 'HIGH' region motif is present at residues 9-19 (PSPTGYLHVGG). The 'KMSKS' region motif lies at 234-238 (PLSKR). K237 contributes to the ATP binding site.

It belongs to the class-I aminoacyl-tRNA synthetase family. Glutamate--tRNA ligase type 1 subfamily. In terms of assembly, monomer.

It is found in the cytoplasm. The enzyme catalyses tRNA(Glu) + L-glutamate + ATP = L-glutamyl-tRNA(Glu) + AMP + diphosphate. Functionally, catalyzes the attachment of glutamate to tRNA(Glu) in a two-step reaction: glutamate is first activated by ATP to form Glu-AMP and then transferred to the acceptor end of tRNA(Glu). In Pseudothermotoga lettingae (strain ATCC BAA-301 / DSM 14385 / NBRC 107922 / TMO) (Thermotoga lettingae), this protein is Glutamate--tRNA ligase 2.